A 330-amino-acid polypeptide reads, in one-letter code: Taste receptor type 2 member 117 (330 aa).

Topologically, residues 1–16 (MKHFWKILSVISQSTL) are extracellular. The helical transmembrane segment at 17 to 37 (SVILIVELVIGIIGNGFMVLV) threads the bilayer. Over 38–53 (HCMDWVKKKKMSLVNQ) the chain is Cytoplasmic. The helical transmembrane segment at 54 to 74 (ILTALSISRIFQLCLLFISLV) threads the bilayer. At 75–95 (INFSYTDLTTSSRMIQVMYNA) the chain is on the extracellular side. A glycan (N-linked (GlcNAc...) asparagine) is linked at Asn-76. Residues 96–116 (WILANHFSIWIATCLTVLYFL) traverse the membrane as a helical segment. Topologically, residues 117–135 (KIANFSNSFFLYLKWRVEK) are cytoplasmic. Residues 136–156 (VVSVTLLVSLLLLILNILLTN) form a helical membrane-spanning segment. The Extracellular segment spans residues 157–190 (LETDMWTNEYQRNISCSFSSHYYAKCHRQVLRLH). Asn-169 is a glycosylation site (N-linked (GlcNAc...) asparagine). Residues 191-211 (IIFLSVPVVLSLSTFLLLIFS) traverse the membrane as a helical segment. The Cytoplasmic portion of the chain corresponds to 212 to 239 (LWTHHKRMQQHVQGGRDARTTAHFKALQ). A helical transmembrane segment spans residues 240–260 (TVIAFFLLYSIFILSVLIQIW). At 261-269 (KYELLKKNL) the chain is on the extracellular side. The chain crosses the membrane as a helical span at residues 270–290 (FVVFCEVVYIAFPTFHSYILI). Residues 291 to 330 (VGDMKLRQACLPLCIIAAEIQTTLCRNFRSLKYFRLCCIF) lie on the Cytoplasmic side of the membrane.

It belongs to the G-protein coupled receptor T2R family.

It is found in the membrane. Putative taste receptor which may play a role in the perception of bitterness. This Mus musculus (Mouse) protein is Taste receptor type 2 member 117.